Here is a 144-residue protein sequence, read N- to C-terminus: Large ribosomal subunit protein uL15 (144 aa).

The tract at residues 1–52 (MRLNSLSPAEGAKHSAKRLGRGIGSGLGKTGGRGHKGQKSRTGGGVRRGFEG) is disordered. Gly residues predominate over residues 21-31 (RGIGSGLGKTG).

This sequence belongs to the universal ribosomal protein uL15 family. In terms of assembly, part of the 50S ribosomal subunit.

Functionally, binds to the 23S rRNA. The protein is Large ribosomal subunit protein uL15 of Haemophilus ducreyi (strain 35000HP / ATCC 700724).